A 367-amino-acid polypeptide reads, in one-letter code: DNA replication and repair protein RecF (367 aa).

30-37 contacts ATP; sequence GNNAQGKT.

This sequence belongs to the RecF family.

Its subcellular location is the cytoplasm. In terms of biological role, the RecF protein is involved in DNA metabolism; it is required for DNA replication and normal SOS inducibility. RecF binds preferentially to single-stranded, linear DNA. It also seems to bind ATP. This Clostridium tetani (strain Massachusetts / E88) protein is DNA replication and repair protein RecF.